Here is a 1620-residue protein sequence, read N- to C-terminus: ALK tyrosine kinase receptor (1620 aa).

The first 18 residues, 1-18 (MGAIGLLWLLPLLLSTAA), serve as a signal peptide directing secretion. At 19-1038 (VGSGMGTGQR…PHLPLSLILS (1020 aa)) the chain is on the extracellular side. The tract at residues 48-70 (RLQRKSLAVDFVVPSLFRVYARD) is heparin-binding region. N-linked (GlcNAc...) asparagine glycans are attached at residues Asn169, Asn244, Asn285, Asn324, Asn411, Asn424, Asn445, Asn563, Asn571, and Asn627. Positions 264–427 (LECSFDFPCE…DFFALKNCSE (164 aa)) constitute an MAM 1 domain. The 37-residue stretch at 437 to 473 (LQSSFTCWNGTVLQLGQACDFHQDCAQGEDESQMCRK) folds into the LDL-receptor class A domain. Residues 478-636 (FYCNFEDGFC…NISISLDCYL (159 aa)) enclose the MAM 2 domain. Residues 650-674 (PKSRNLFERNPNKELKPGENSPRQT) form a disordered region. Basic and acidic residues predominate over residues 654-666 (NLFERNPNKELKP). Cys688 and Cys701 form a disulfide bridge. N-linked (GlcNAc...) asparagine glycosylation is present at Asn709. Cysteines 783 and 794 form a disulfide. 4 N-linked (GlcNAc...) asparagine glycosylation sites follow: Asn808, Asn863, Asn864, and Asn886. Cysteines 906 and 928 form a disulfide. N-linked (GlcNAc...) asparagine glycosylation occurs at Asn986. Disulfide bonds link Cys987–Cys995, Cys990–Cys1006, and Cys1008–Cys1021. Positions 987-1025 (CSHCEVDECHMDPESHKVICFCDHGTVLAEDGVSCIVSP) are EGF-like. A helical transmembrane segment spans residues 1039–1059 (VVTSALVAALVLAFSGIMIVY). The Cytoplasmic portion of the chain corresponds to 1060–1620 (RRKHQELQAM…SKNSMNQPGP (561 aa)). A phosphotyrosine mark is found at Tyr1078, Tyr1092, and Tyr1096. In terms of domain architecture, Protein kinase spans 1116–1392 (ITLIRGLGHG…IEYCTQDPDV (277 aa)). His1124 contributes to the ATP binding site. Residue Tyr1131 is modified to Phosphotyrosine. ATP contacts are provided by residues Lys1150 and 1197–1199 (ELM). The Proton acceptor role is filled by Asp1249. Asp1270 serves as a coordination point for ATP. Position 1278 is a phosphotyrosine (Tyr1278). The segment at 1408 to 1463 (EEKVPVRPKDPEGVPPLLVSQQAKREEERSPAAPPPLPTTSSGKAAKKPTAAEISV) is disordered. A compositionally biased stretch (basic and acidic residues) spans 1410–1419 (KVPVRPKDPE). The residue at position 1507 (Tyr1507) is a Phosphotyrosine. The tract at residues 1514–1540 (KPTKKNNPIAKKEPHDRGNLGLEGSCT) is disordered. Tyr1604 carries the post-translational modification Phosphotyrosine.

The protein belongs to the protein kinase superfamily. Tyr protein kinase family. Insulin receptor subfamily. In terms of assembly, homodimer; homodimerizes following heparin- and ligand-binding. Interacts with CBL, IRS1, PIK3R1 and PLCG1. Interacts with FRS2 and SHC1. Interacts with PTN and MDK. In terms of processing, phosphorylated at tyrosine residues by autocatalysis, which activates kinase activity. In cells not stimulated by a ligand, receptor protein tyrosine phosphatase beta and zeta complex (PTPRB/PTPRZ1) dephosphorylates ALK at the sites in ALK that are undergoing autophosphorylation through autoactivation. Phosphorylation at Tyr-1507 is critical for SHC1 association. Post-translationally, N-glycosylated. In terms of tissue distribution, expressed in brain and CNS. Also expressed in the small intestine and testis, but not in normal lymphoid cells.

Its subcellular location is the cell membrane. It catalyses the reaction L-tyrosyl-[protein] + ATP = O-phospho-L-tyrosyl-[protein] + ADP + H(+). Activated upon ALKAL2 ligand-binding. ALKAL2-driven activation is coupled with heparin-binding. Following ligand-binding, homodimerizes and autophosphorylates, activating its kinase activity. Inactivated through dephosphorylation by receptor protein tyrosine phosphatase beta and zeta complex (PTPRB/PTPRZ1) when there is no stimulation by a ligand. Staurosporine, crizotinib and CH5424802 act as inhibitors of ALK kinase activity. Its function is as follows. Neuronal receptor tyrosine kinase that is essentially and transiently expressed in specific regions of the central and peripheral nervous systems and plays an important role in the genesis and differentiation of the nervous system. Also acts as a key thinness protein involved in the resistance to weight gain: in hypothalamic neurons, controls energy expenditure acting as a negative regulator of white adipose tissue lipolysis and sympathetic tone to fine-tune energy homeostasis. Following activation by ALKAL2 ligand at the cell surface, transduces an extracellular signal into an intracellular response. In contrast, ALKAL1 is not a potent physiological ligand for ALK. Ligand-binding to the extracellular domain induces tyrosine kinase activation, leading to activation of the mitogen-activated protein kinase (MAPK) pathway. Phosphorylates almost exclusively at the first tyrosine of the Y-x-x-x-Y-Y motif. Induces tyrosine phosphorylation of CBL, FRS2, IRS1 and SHC1, as well as of the MAP kinases MAPK1/ERK2 and MAPK3/ERK1. ALK activation may also be regulated by pleiotrophin (PTN) and midkine (MDK). PTN-binding induces MAPK pathway activation, which is important for the anti-apoptotic signaling of PTN and regulation of cell proliferation. MDK-binding induces phosphorylation of the ALK target insulin receptor substrate (IRS1), activates mitogen-activated protein kinases (MAPKs) and PI3-kinase, resulting also in cell proliferation induction. Drives NF-kappa-B activation, probably through IRS1 and the activation of the AKT serine/threonine kinase. Recruitment of IRS1 to activated ALK and the activation of NF-kappa-B are essential for the autocrine growth and survival signaling of MDK. In Homo sapiens (Human), this protein is ALK tyrosine kinase receptor.